A 259-amino-acid chain; its full sequence is 5'-nucleotidase SurE (259 aa).

A divalent metal cation contacts are provided by D10, D11, S41, and N96.

It belongs to the SurE nucleotidase family. The cofactor is a divalent metal cation.

It is found in the cytoplasm. It catalyses the reaction a ribonucleoside 5'-phosphate + H2O = a ribonucleoside + phosphate. Functionally, nucleotidase that shows phosphatase activity on nucleoside 5'-monophosphates. In Wolinella succinogenes (strain ATCC 29543 / DSM 1740 / CCUG 13145 / JCM 31913 / LMG 7466 / NCTC 11488 / FDC 602W) (Vibrio succinogenes), this protein is 5'-nucleotidase SurE.